The chain runs to 102 residues: Putative pterin-4-alpha-carbinolamine dehydratase (102 aa).

This sequence belongs to the pterin-4-alpha-carbinolamine dehydratase family.

The catalysed reaction is (4aS,6R)-4a-hydroxy-L-erythro-5,6,7,8-tetrahydrobiopterin = (6R)-L-erythro-6,7-dihydrobiopterin + H2O. The polypeptide is Putative pterin-4-alpha-carbinolamine dehydratase (Burkholderia orbicola (strain MC0-3)).